The primary structure comprises 140 residues: GTP-dependent dephospho-CoA kinase (140 aa).

GTP-binding residues include Asp-21, Val-22, Val-23, Asp-40, Lys-42, and Glu-92.

The protein belongs to the GTP-dependent DPCK family.

It carries out the reaction 3'-dephospho-CoA + GTP = GDP + CoA + H(+). Its pathway is cofactor biosynthesis; coenzyme A biosynthesis. Functionally, catalyzes the GTP-dependent phosphorylation of the 3'-hydroxyl group of dephosphocoenzyme A to form coenzyme A (CoA). The protein is GTP-dependent dephospho-CoA kinase of Pyrobaculum aerophilum (strain ATCC 51768 / DSM 7523 / JCM 9630 / CIP 104966 / NBRC 100827 / IM2).